We begin with the raw amino-acid sequence, 644 residues long: Protein DA1-related 6 (644 aa).

UIM domains are found at residues 119–138 (EEDE…NNRR), 181–200 (DVDE…KGKG), and 244–263 (DEDE…KGQI). The region spanning 284–355 (SLCGGCNFAV…YVCKEKKMKT (72 aa)) is the LIM zinc-binding domain. The span at 572–589 (ASSSASSSSRTPPAASAS) shows a compositional bias: low complexity. The disordered stretch occupies residues 572–591 (ASSSASSSSRTPPAASASKK).

In terms of assembly, interacts with ubiquitin.

In terms of biological role, ubiquitin receptor that probably regulates developmental process. The polypeptide is Protein DA1-related 6 (DAR6) (Arabidopsis thaliana (Mouse-ear cress)).